Reading from the N-terminus, the 64-residue chain is Large ribosomal subunit protein bL35 (64 aa).

Over residues 1-14 the composition is skewed to basic residues; sequence MKQKTHKGAAKRIK. Residues 1–50 are disordered; that stretch reads MKQKTHKGAAKRIKISGSGKLRREQANRRHLLEGKPSKRTRRLKGTEDVA. The span at 21 to 36 shows a compositional bias: basic and acidic residues; that stretch reads LRREQANRRHLLEGKP.

It belongs to the bacterial ribosomal protein bL35 family.

The sequence is that of Large ribosomal subunit protein bL35 from Corynebacterium jeikeium (strain K411).